A 712-amino-acid chain; its full sequence is Rap1 GTPase-activating protein 2 (712 aa).

The interval 1 to 33 (MLAGLKVKKQELANSSDVTLPDRPLSPPLTAPP) is disordered. Position 26 is a phosphoserine (Ser26). At Thr30 the chain carries Phosphothreonine. Positions 229 to 445 (IVSYDEHDVN…RTRAALLDNL (217 aa)) constitute a Rap-GAP domain. Ser488, Ser495, Ser525, Ser539, Ser545, Ser593, and Ser594 each carry phosphoserine. Residues 529–712 (AAATAKNQSR…LSHASSSAGH (184 aa)) are disordered. Residues 566-594 (DSASSTPKTPDGGHSSQEIKSETSSNPSS) show a composition bias toward polar residues. Residues 599-612 (PNKEKPFIKLKENG) are compositionally biased toward basic and acidic residues. Low complexity predominate over residues 617 to 629 (SRSSSSTSSFSST). The span at 641-652 (SGSSQPSTTSPF) shows a compositional bias: polar residues. Low complexity predominate over residues 660 to 669 (SPSPSSESPS). Positions 681–694 (RSPTDAKSRNSPRS) are enriched in polar residues.

It is found in the cytoplasm. Its function is as follows. GTPase activator for the nuclear Ras-related regulatory protein RAP-1A (KREV-1), converting it to the putatively inactive GDP-bound state. The sequence is that of Rap1 GTPase-activating protein 2 (Rap1gap2) from Mus musculus (Mouse).